Reading from the N-terminus, the 159-residue chain is Capsid protein (159 aa).

Belongs to the virgaviridae capsid protein family.

Its subcellular location is the virion. Functionally, capsid protein self-assembles to form rod-shaped virions about 18 nm in diameter with a central canal enclosing the viral genomic RNA. The sequence is that of Capsid protein (CP) from Tobacco mild green mosaic virus (TMGMV).